A 224-amino-acid chain; its full sequence is LOB domain-containing protein 15 (224 aa).

The LOB domain maps to 44 to 145 (TPCAACKLLR…AELTAVRSEI (102 aa)). The segment at 171 to 224 (SGGVSVIAPPPQRPTTPPQPTTAHPPSPSSCVFSQPTTRDLEYGNIESENNYFG) is disordered. Positions 178 to 198 (APPPQRPTTPPQPTTAHPPSP) are enriched in pro residues.

It belongs to the LOB domain-containing protein family. In terms of tissue distribution, expressed in young shoots, roots, stems, leaves and flowers.

The protein is LOB domain-containing protein 15 (LBD15) of Arabidopsis thaliana (Mouse-ear cress).